The chain runs to 488 residues: Protein kinase C and casein kinase substrate in neurons 2 protein (488 aa).

One can recognise an F-BAR domain in the interval 11 to 282 (VEVSSDSFWE…SIKAADAVED (272 aa)). Residues 25–274 (KRTVKRIDDG…GIYRELEQSI (250 aa)) adopt a coiled-coil conformation. K53 carries the post-translational modification N6-acetyllysine. A compositionally biased stretch (basic and acidic residues) spans 163–176 (CKEEKLAVSREANS). The segment at 163-183 (CKEEKLAVSREANSKADPSLN) is disordered. The residue at position 273 (S273) is a Phosphoserine. S315 carries the post-translational modification Phosphoserine; by PKC. Residues 316-429 (RREKKKAADG…PFDEDTTSGT (114 aa)) are disordered. Residues 329–364 (TGINQTGDQSGQNKPSSNLSVPSNPAQSTQLQSSYN) show a composition bias toward polar residues. Positions 364-366 (NPF) match the NPF1 motif. Phosphoserine; by IKKB is present on S375. Polar residues predominate over residues 386 to 396 (NVSSYEKTQNY). S401 bears the Phosphoserine mark. The segment covering 406 to 418 (NNPFSSTDANGDS) has biased composition (polar residues). The NPF2 motif lies at 407–409 (NPF). The NPF3 motif lies at 419-421 (NPF). One can recognise an SH3 domain in the interval 428 to 488 (GTEVRVRALY…YPANYVEAIQ (61 aa)). At S448 the chain carries Phosphoserine.

The protein belongs to the PACSIN family. Homodimer. May form heterooligomers with other PACSINs. Interacts (via NPF motifs) with EHD1 (via EH domain). Interacts with EHD3. Interacts (via the SH3 domain) with MICALL1. Interacts with RAC1. Interacts (via SH3 domain) with DNM1, SYN1, SYNJ1 and WASL. Interacts with CAV1. Interacts with TRPV4. Forms a complex with EHD4 and MICALL1; the complex controls CDH5 trafficking and coordinates angiogenesis. Post-translationally, phosphorylated by casein kinase 2 (CK2) and protein kinase C (PKC). Phosphorylation by PKC probably decreases the membrane binding and tubulation capacities of PACSIN2, thereby modulating the lifetime of caveolae. In terms of tissue distribution, widely expressed (at protein level). Isoforms 1/3 are predominantly expressed in heart and in PC-12 cells, a pheochromocytoma cell line (at protein level). Isoforms 2/4 are widely expressed with highest levels in muscle, testis and brain (at protein level).

It is found in the cytoplasm. It localises to the cytoskeleton. The protein resides in the cytoplasmic vesicle membrane. Its subcellular location is the cell projection. The protein localises to the ruffle membrane. It is found in the early endosome. It localises to the recycling endosome membrane. The protein resides in the cell membrane. Its subcellular location is the membrane. The protein localises to the caveola. It is found in the cell junction. It localises to the adherens junction. Regulates the morphogenesis and endocytosis of caveolae. Lipid-binding protein that is able to promote the tubulation of the phosphatidic acid-containing membranes it preferentially binds. Plays a role in intracellular vesicle-mediated transport. Involved in the endocytosis of cell-surface receptors like the EGF receptor, contributing to its internalization in the absence of EGF stimulus. Facilitates endothelial front-rear polarity during migration by recruiting EHD4 and MICALL1 to asymmetric adherens junctions between leader and follower cells. The polypeptide is Protein kinase C and casein kinase substrate in neurons 2 protein (Pacsin2) (Rattus norvegicus (Rat)).